Consider the following 881-residue polypeptide: EEF1AKMT4-ECE2 readthrough transcript protein (881 aa).

A methyltransferase-like region region spans residues 1–160 (MASPRTPVSP…VHTVDQVLSE (160 aa)). At 1–178 (MASPRTPVSP…QLFGSHTQLE (178 aa)) the chain is on the cytoplasmic side. 2 residues coordinate S-adenosyl-L-methionine: tryptophan 26 and tyrosine 30. Phosphotyrosine is present on tyrosine 39. Residues tryptophan 41, glycine 66, 88–89 (DY), 113–114 (DV), and lysine 130 each bind S-adenosyl-L-methionine. Residue histidine 174 is modified to Phosphoserine. The chain crosses the membrane as a helical; Signal-anchor for type II membrane protein span at residues 179 to 199 (LVLAGLILVLAALLLGCLVAL). The Lumenal segment spans residues 200–881 (WVHRDPAHST…MNPGQLCEVW (682 aa)). The Peptidase M13 domain occupies 209 to 881 (TCVTEACIRV…MNPGQLCEVW (673 aa)). 5 disulfide bridges follow: cysteine 210–cysteine 215, cysteine 233–cysteine 866, cysteine 241–cysteine 826, cysteine 297–cysteine 546, and cysteine 755–cysteine 878. 7 N-linked (GlcNAc...) asparagine glycosylation sites follow: asparagine 277, asparagine 281, asparagine 322, asparagine 382, asparagine 427, asparagine 494, and asparagine 650. Histidine 718 is a binding site for Zn(2+). The active site involves glutamate 719. Histidine 722 is a Zn(2+) binding site. N-linked (GlcNAc...) asparagine glycosylation is found at asparagine 743 and asparagine 751. Zn(2+) is bound at residue glutamate 778. The active-site Proton donor is aspartate 782.

The protein in the N-terminal section; belongs to the methyltransferase superfamily. This sequence in the C-terminal section; belongs to the peptidase M13 family. Requires Zn(2+) as cofactor. In terms of tissue distribution, expressed at high levels in central nervous system. Expressed in adrenal glands, ovary and uterus, and at low levels in heart.

The protein localises to the golgi apparatus membrane. It localises to the cytoplasmic vesicle. The protein resides in the secretory vesicle membrane. It carries out the reaction Hydrolysis of the 21-Trp-|-Val-22 bond in big endothelin to form endothelin 1.. Inhibited by phosphoramidon. Converts big endothelin-1 to endothelin-1. May also have methyltransferase activity. May play a role in amyloid-beta processing. The sequence is that of EEF1AKMT4-ECE2 readthrough transcript protein from Mus musculus (Mouse).